Reading from the N-terminus, the 230-residue chain is ATP synthase subunit a (230 aa).

The next 5 helical transmembrane spans lie at 17–37, 78–98, 107–127, 165–187, and 198–218; these read LPIT…FIMA, IFPF…IGVI, DLSV…WFGI, LFGN…GFLV, and EAII…AGGI.

This sequence belongs to the ATPase A chain family. F-type ATPases have 2 components, CF(1) - the catalytic core - and CF(0) - the membrane proton channel. CF(1) has five subunits: alpha(3), beta(3), gamma(1), delta(1), epsilon(1). CF(0) has three main subunits: a(1), b(2) and c(9-12). The alpha and beta chains form an alternating ring which encloses part of the gamma chain. CF(1) is attached to CF(0) by a central stalk formed by the gamma and epsilon chains, while a peripheral stalk is formed by the delta and b chains.

It localises to the cell inner membrane. Functionally, key component of the proton channel; it plays a direct role in the translocation of protons across the membrane. This chain is ATP synthase subunit a, found in Legionella pneumophila (strain Paris).